The primary structure comprises 196 residues: Pyridoxal 5'-phosphate synthase subunit PdxT (196 aa).

An L-glutamine-binding site is contributed by 47–49 (GES). Residue Cys-79 is the Nucleophile of the active site. Residues Arg-106 and 134–135 (IR) each bind L-glutamine. Catalysis depends on charge relay system residues His-170 and Glu-172.

It belongs to the glutaminase PdxT/SNO family. As to quaternary structure, in the presence of PdxS, forms a dodecamer of heterodimers. Only shows activity in the heterodimer.

The enzyme catalyses aldehydo-D-ribose 5-phosphate + D-glyceraldehyde 3-phosphate + L-glutamine = pyridoxal 5'-phosphate + L-glutamate + phosphate + 3 H2O + H(+). It carries out the reaction L-glutamine + H2O = L-glutamate + NH4(+). It participates in cofactor biosynthesis; pyridoxal 5'-phosphate biosynthesis. Its function is as follows. Catalyzes the hydrolysis of glutamine to glutamate and ammonia as part of the biosynthesis of pyridoxal 5'-phosphate. The resulting ammonia molecule is channeled to the active site of PdxS. The sequence is that of Pyridoxal 5'-phosphate synthase subunit PdxT from Bacillus cereus (strain ZK / E33L).